Here is a 54-residue protein sequence, read N- to C-terminus: Large ribosomal subunit protein bL33 (54 aa).

Belongs to the bacterial ribosomal protein bL33 family.

The chain is Large ribosomal subunit protein bL33 from Corynebacterium glutamicum (strain R).